The chain runs to 34 residues: Photosystem II reaction center protein Psb30 (34 aa).

Residues 6-26 traverse the membrane as a helical segment; it reads VVFQLMALFFVLAAGPAVVVL.

It belongs to the Psb30/Ycf12 family. As to quaternary structure, PSII is composed of 1 copy each of membrane proteins PsbA, PsbB, PsbC, PsbD, PsbE, PsbF, PsbH, PsbI, PsbJ, PsbK, PsbL, PsbM, PsbT, PsbX, PsbY, PsbZ, Psb30/Ycf12, peripheral proteins of the oxygen-evolving complex and a large number of cofactors. It forms dimeric complexes.

It is found in the plastid. The protein resides in the chloroplast thylakoid membrane. Its function is as follows. A core subunit of photosystem II (PSII), probably helps stabilize the reaction center. The chain is Photosystem II reaction center protein Psb30 from Stigeoclonium helveticum (Green alga).